Reading from the N-terminus, the 269-residue chain is UPF0761 membrane protein HI_0276 (269 aa).

6 helical membrane-spanning segments follow: residues methionine 32–phenylalanine 52, methionine 89–aspartate 109, phenylalanine 128–isoleucine 148, leucine 168–valine 188, phenylalanine 203–phenylalanine 223, and alanine 232–valine 252.

The protein belongs to the UPF0761 family.

It localises to the cell inner membrane. This is UPF0761 membrane protein HI_0276 from Haemophilus influenzae (strain ATCC 51907 / DSM 11121 / KW20 / Rd).